A 162-amino-acid polypeptide reads, in one-letter code: AP-1 complex subunit sigma-2 (162 aa).

Belongs to the adaptor complexes small subunit family. Adaptor protein complex 1 (AP-1) is a heterotetramer composed of two large adaptins (gamma-type subunit and beta-type subunit), a medium adaptin (mu-type subunit) and a small adaptin (sigma-type subunit). Expressed in roots, stems, leaves, flowers and siliques (developing fruits and seeds).

It is found in the golgi apparatus. The protein resides in the cytoplasmic vesicle. It localises to the clathrin-coated vesicle membrane. Its function is as follows. Subunit of clathrin-associated adaptor protein complex 1 that plays a role in protein sorting at the trans-Golgi network and early endosomes (TGN/EE). The AP complexes mediate the recruitment of clathrin to membranes and the recognition of sorting signals within the cytosolic tails of transmembrane cargo molecules. The protein is AP-1 complex subunit sigma-2 (AAP19-2) of Arabidopsis thaliana (Mouse-ear cress).